The primary structure comprises 564 residues: uncharacterized protein (564 aa).

Residues 1 to 21 (MRRIGAITALSLPVLLSLLYS) form the signal peptide. Cysteine 22 is lipidated: N-palmitoyl cysteine. The S-diacylglycerol cysteine moiety is linked to residue cysteine 22.

It is found in the cell membrane. This is an uncharacterized protein from Aquifex aeolicus (strain VF5).